The chain runs to 503 residues: Cytosolic carboxypeptidase 6 (503 aa).

The region spanning 167 to 438 (YPYTYTRFQH…NVARTFLDYY (272 aa)) is the Peptidase M14 domain. Positions 230, 233, and 328 each coordinate Zn(2+). The active-site Proton donor/acceptor is glutamate 401. Basic and acidic residues-rich tracts occupy residues 459 to 469 (IEVQRRKEKSP) and 487 to 503 (KGDKKSSVNHKDPSTPF). A disordered region spans residues 459-503 (IEVQRRKEKSPPYKHPLLRGPASNYPNSKGDKKSSVNHKDPSTPF).

The protein belongs to the peptidase M14 family. In terms of assembly, interacts with MYLK. Requires Zn(2+) as cofactor.

It is found in the cytoplasm. The protein resides in the cytosol. The protein localises to the cytoskeleton. It localises to the microtubule organizing center. Its subcellular location is the centrosome. It is found in the centriole. The protein resides in the golgi apparatus. The protein localises to the cilium basal body. It catalyses the reaction (L-glutamyl)(n+1)-gamma-L-glutamyl-L-glutamyl-[protein] + H2O = (L-glutamyl)(n)-gamma-L-glutamyl-L-glutamyl-[protein] + L-glutamate. The catalysed reaction is C-terminal L-alpha-aminoacyl-L-glutamyl-L-glutamyl-[tubulin] + H2O = C-terminal L-alpha-aminoacyl-L-glutamyl-[tubulin] + L-glutamate. In terms of biological role, metallocarboxypeptidase that mediates protein deglutamylation of tubulin and non-tubulin target proteins. Catalyzes the removal of polyglutamate side chains present on the gamma-carboxyl group of glutamate residues within the C-terminal tail of tubulin protein. Specifically cleaves tubulin long-side-chains, while it is not able to remove the branching point glutamate. Also catalyzes the removal of polyglutamate residues from the carboxy-terminus of non-tubulin proteins such as MYLK. Mediates the deglutamylation of nucleotidyltransferase CGAS, leading to CGAS antiviral defense response activation. Involved in KLF4 deglutamylation which promotes KLF4 proteasome-mediated degradation, thereby negatively regulating cell pluripotency maintenance and embryogenesis. The chain is Cytosolic carboxypeptidase 6 from Homo sapiens (Human).